The chain runs to 130 residues: D-ribose pyranase (130 aa).

His-20 serves as the catalytic Proton donor. Substrate contacts are provided by residues Asp-28, His-97, and 119–121 (YAN).

It belongs to the RbsD / FucU family. RbsD subfamily. In terms of assembly, homodecamer.

Its subcellular location is the cytoplasm. The catalysed reaction is beta-D-ribopyranose = beta-D-ribofuranose. It functions in the pathway carbohydrate metabolism; D-ribose degradation; D-ribose 5-phosphate from beta-D-ribopyranose: step 1/2. Catalyzes the interconversion of beta-pyran and beta-furan forms of D-ribose. The polypeptide is D-ribose pyranase (Thermoanaerobacter pseudethanolicus (strain ATCC 33223 / 39E) (Clostridium thermohydrosulfuricum)).